Here is a 545-residue protein sequence, read N- to C-terminus: MTTNYIFVTGGVVSSLGKGIAAASLAAILEARGLKVTMMKLDPYINVDPGTMSPTQHGEVFVTEDGAETDLDLGHYERFIRTKMTKRNNFTAGRVYADVLRKERRGDYLGATIQVIPHITNAIKDRVIAGSEGHDIAIVEVGGTVGDIESLPFMEAIRQLAIEVGREHAMFMHLTLVPYLAAAGEVKTKPTQHSVKELLSIGIQPDILVCRSDRMIPANERKKIALFCNVPEKAVISMKDVDSIYKIPQLIRSQGLDDLVCARFGINAPEADLSEWEQVIYEEANPTGEVTIGMVGKYTELPDAYKSVNEALKHAGLKNRLSVTIKYVDSQDVETKGTDVLNGLDAILVPGGFGDRGIEGKIRAAQYARENKIPYLGICLGMQVALIEYARNVAGMEGAHSTEFNKNTKYPVVGLITEWVDGEGNVEERSEKSDLGGTMRLGSQLCHLEKGTKAYELYGSATIHERHRHRYEVNNLLRPQIEKAGLKVSGLSADKKLVEVIENPAHPWFVAAQFHPEFTSTPRDGHPLFAGFVKAAGQFQRGELK.

The interval 1–266 is amidoligase domain; it reads MTTNYIFVTG…DDLVCARFGI (266 aa). Serine 14 is a CTP binding site. Residue serine 14 participates in UTP binding. ATP-binding positions include 15–20 and aspartate 72; that span reads SLGKGI. Mg(2+) contacts are provided by aspartate 72 and glutamate 140. Residues 147-149, 187-192, and lysine 223 contribute to the CTP site; these read DIE and KTKPTQ. UTP is bound by residues 187 to 192 and lysine 223; that span reads KTKPTQ. 239–241 is an ATP binding site; that stretch reads KDV. Residues 291-542 enclose the Glutamine amidotransferase type-1 domain; sequence TIGMVGKYTE…VKAAGQFQRG (252 aa). Glycine 352 is a binding site for L-glutamine. Residue cysteine 379 is the Nucleophile; for glutamine hydrolysis of the active site. L-glutamine-binding positions include 380–383, glutamate 403, and arginine 470; that span reads LGMQ. Catalysis depends on residues histidine 515 and glutamate 517.

This sequence belongs to the CTP synthase family. As to quaternary structure, homotetramer.

The enzyme catalyses UTP + L-glutamine + ATP + H2O = CTP + L-glutamate + ADP + phosphate + 2 H(+). It carries out the reaction L-glutamine + H2O = L-glutamate + NH4(+). The catalysed reaction is UTP + NH4(+) + ATP = CTP + ADP + phosphate + 2 H(+). It participates in pyrimidine metabolism; CTP biosynthesis via de novo pathway; CTP from UDP: step 2/2. Allosterically activated by GTP, when glutamine is the substrate; GTP has no effect on the reaction when ammonia is the substrate. The allosteric effector GTP functions by stabilizing the protein conformation that binds the tetrahedral intermediate(s) formed during glutamine hydrolysis. Inhibited by the product CTP, via allosteric rather than competitive inhibition. In terms of biological role, catalyzes the ATP-dependent amination of UTP to CTP with either L-glutamine or ammonia as the source of nitrogen. Regulates intracellular CTP levels through interactions with the four ribonucleotide triphosphates. This is CTP synthase from Vibrio cholerae serotype O1 (strain ATCC 39541 / Classical Ogawa 395 / O395).